The sequence spans 452 residues: Ribulose bisphosphate carboxylase large chain (452 aa).

Residues 1-2 constitute a propeptide that is removed on maturation; that stretch reads MS. P3 bears the N-acetylproline mark. K14 is modified (N6,N6,N6-trimethyllysine). Substrate is bound by residues N123 and T173. K175 serves as the catalytic Proton acceptor. K177 contacts substrate. Residues K201, D203, and E204 each coordinate Mg(2+). K201 carries the post-translational modification N6-carboxylysine. The active-site Proton acceptor is H294. 3 residues coordinate substrate: R295, X327, and S379.

The protein belongs to the RuBisCO large chain family. Type I subfamily. As to quaternary structure, heterohexadecamer of 8 large chains and 8 small chains; disulfide-linked. The disulfide link is formed within the large subunit homodimers. Requires Mg(2+) as cofactor. The disulfide bond which can form in the large chain dimeric partners within the hexadecamer appears to be associated with oxidative stress and protein turnover.

The protein localises to the plastid. The protein resides in the chloroplast. The enzyme catalyses 2 (2R)-3-phosphoglycerate + 2 H(+) = D-ribulose 1,5-bisphosphate + CO2 + H2O. The catalysed reaction is D-ribulose 1,5-bisphosphate + O2 = 2-phosphoglycolate + (2R)-3-phosphoglycerate + 2 H(+). RuBisCO catalyzes two reactions: the carboxylation of D-ribulose 1,5-bisphosphate, the primary event in carbon dioxide fixation, as well as the oxidative fragmentation of the pentose substrate in the photorespiration process. Both reactions occur simultaneously and in competition at the same active site. The sequence is that of Ribulose bisphosphate carboxylase large chain from Salvadora persica (Toothbrush tree).